The sequence spans 181 residues: ATP synthase subunit delta (181 aa).

It belongs to the ATPase delta chain family. In terms of assembly, F-type ATPases have 2 components, F(1) - the catalytic core - and F(0) - the membrane proton channel. F(1) has five subunits: alpha(3), beta(3), gamma(1), delta(1), epsilon(1). F(0) has three main subunits: a(1), b(2) and c(10-14). The alpha and beta chains form an alternating ring which encloses part of the gamma chain. F(1) is attached to F(0) by a central stalk formed by the gamma and epsilon chains, while a peripheral stalk is formed by the delta and b chains.

It is found in the cell membrane. F(1)F(0) ATP synthase produces ATP from ADP in the presence of a proton or sodium gradient. F-type ATPases consist of two structural domains, F(1) containing the extramembraneous catalytic core and F(0) containing the membrane proton channel, linked together by a central stalk and a peripheral stalk. During catalysis, ATP synthesis in the catalytic domain of F(1) is coupled via a rotary mechanism of the central stalk subunits to proton translocation. Functionally, this protein is part of the stalk that links CF(0) to CF(1). It either transmits conformational changes from CF(0) to CF(1) or is implicated in proton conduction. The polypeptide is ATP synthase subunit delta (Lacticaseibacillus casei (strain BL23) (Lactobacillus casei)).